The sequence spans 1902 residues: PI-type proteinase (1902 aa).

A signal peptide spans 1 to 33 (MQRKKKGLSILLAGTVALGALAVLPVGEIQAKA). The propeptide occupies 34–187 (AISQQTKGSS…VTLAKVYYPT (154 aa)). One can recognise a Peptidase S8 domain in the interval 191–697 (ANSMANVQAV…AGLVDVKAAI (507 aa)). Catalysis depends on charge relay system residues Asp-217, His-281, and Ser-620. Positions 1796-1874 (GKGDGTTGTS…GALPKTGETT (79 aa)) are disordered. Over residues 1797-1812 (KGDGTTGTSDKGGGQG) the composition is skewed to gly residues. Positions 1830-1843 (SQPSSGGNIPTNPA) are enriched in polar residues. An LPXTG sorting signal motif is present at residues 1867 to 1871 (LPKTG). A Pentaglycyl murein peptidoglycan amidated threonine modification is found at Thr-1870. Positions 1871–1902 (GETTERPAFGFLGVIVVILMGVLGLKRKQREE) are cleaved as a propeptide — removed by sortase.

This sequence belongs to the peptidase S8 family.

It is found in the secreted. Its subcellular location is the cell wall. It carries out the reaction Endopeptidase activity with very broad specificity, although some subsite preference have been noted, e.g. large hydrophobic residues in the P1 and P4 positions, and Pro in the P2 position. Best known for its action on caseins, although it has been shown to hydrolyze hemoglobin and oxidized insulin B-chain.. Functionally, protease which breaks down milk proteins during the growth of the bacteria on milk. The sequence is that of PI-type proteinase (prtP) from Lactococcus lactis subsp. cremoris (Streptococcus cremoris).